Reading from the N-terminus, the 193-residue chain is Ancillary SecYEG translocon subunit (193 aa).

At Met-1–Asn-8 the chain is on the cytoplasmic side. Residues Ile-9–Phe-29 form a helical membrane-spanning segment. The Periplasmic portion of the chain corresponds to Ser-30–Asn-193.

The protein belongs to the YfgM family. As to quaternary structure, interacts with the SecYEG translocon. Forms a complex with PpiD.

It localises to the cell inner membrane. May mediate protein transfer from the SecYEG translocon to the periplasmic chaperone network via its periplasmic C-terminal region. The chain is Ancillary SecYEG translocon subunit from Buchnera aphidicola subsp. Acyrthosiphon pisum (strain APS) (Acyrthosiphon pisum symbiotic bacterium).